The chain runs to 179 residues: Replication restart protein DnaT (179 aa).

The segment at 156-179 (GGLPKRDVNTVSEPDSQIPPGFRG) is disordered.

Belongs to the DnaT family. In terms of assembly, homooligomerizes. Interacts with PriB. Component of the replication restart primosome. Primosome assembly occurs via a 'hand-off' mechanism. PriA binds to replication forks, subsequently PriB then DnaT bind; DnaT then displaces ssDNA to generate the helicase loading substrate.

Involved in the restart of stalled replication forks, which reloads the replicative helicase on sites other than the origin of replication. Can function in multiple replication restart pathways. Displaces ssDNA from a PriB-ssDNA complex. Probably forms a spiral filament on ssDNA. The polypeptide is Replication restart protein DnaT (Escherichia coli O157:H7).